The sequence spans 338 residues: Lipoate-protein ligase A (338 aa).

Residues 29 to 216 (PATQRVLFLW…AFFAHYGERV (188 aa)) enclose the BPL/LPL catalytic domain. ATP is bound by residues Arg-71, 76 to 79 (GAVF), and Lys-134. Lys-134 is a (R)-lipoate binding site.

Belongs to the LplA family. In terms of assembly, monomer.

The protein resides in the cytoplasm. The catalysed reaction is L-lysyl-[lipoyl-carrier protein] + (R)-lipoate + ATP = N(6)-[(R)-lipoyl]-L-lysyl-[lipoyl-carrier protein] + AMP + diphosphate + H(+). It functions in the pathway protein modification; protein lipoylation via exogenous pathway; protein N(6)-(lipoyl)lysine from lipoate: step 1/2. The protein operates within protein modification; protein lipoylation via exogenous pathway; protein N(6)-(lipoyl)lysine from lipoate: step 2/2. Functionally, catalyzes both the ATP-dependent activation of exogenously supplied lipoate to lipoyl-AMP and the transfer of the activated lipoyl onto the lipoyl domains of lipoate-dependent enzymes. This Escherichia coli O6:H1 (strain CFT073 / ATCC 700928 / UPEC) protein is Lipoate-protein ligase A.